Consider the following 448-residue polypeptide: Chromosomal replication initiator protein DnaA (448 aa).

Residues 1-72 form a domain I, interacts with DnaA modulators region; that stretch reads MPDLQELWNY…VEGAYEFAEI (72 aa). The segment at 72 to 110 is domain II; the sequence is IELTPIFVLPGESDNLTPLEPEEEHVLTKAETPTFLRET. A domain III, AAA+ region region spans residues 111–327; the sequence is HLNSKYTFDT…GALVRVQAYA (217 aa). Residues Gly-155, Gly-157, Lys-158, and Thr-159 each contribute to the ATP site. The domain IV, binds dsDNA stretch occupies residues 328 to 448; the sequence is TMQNAEITTS…ILDLKNTMKS (121 aa).

It belongs to the DnaA family. In terms of assembly, oligomerizes as a right-handed, spiral filament on DNA at oriC.

The protein localises to the cytoplasm. Functionally, plays an essential role in the initiation and regulation of chromosomal replication. ATP-DnaA binds to the origin of replication (oriC) to initiate formation of the DNA replication initiation complex once per cell cycle. Binds the DnaA box (a 9 base pair repeat at the origin) and separates the double-stranded (ds)DNA. Forms a right-handed helical filament on oriC DNA; dsDNA binds to the exterior of the filament while single-stranded (ss)DNA is stabiized in the filament's interior. The ATP-DnaA-oriC complex binds and stabilizes one strand of the AT-rich DNA unwinding element (DUE), permitting loading of DNA polymerase. After initiation quickly degrades to an ADP-DnaA complex that is not apt for DNA replication. Binds acidic phospholipids. In Latilactobacillus sakei subsp. sakei (strain 23K) (Lactobacillus sakei subsp. sakei), this protein is Chromosomal replication initiator protein DnaA.